The following is a 284-amino-acid chain: tRNA-splicing endonuclease (284 aa).

Residues Y222, H229, and K257 contribute to the active site.

Belongs to the tRNA-intron endonuclease family. Archaeal long subfamily. As to quaternary structure, homodimer.

It catalyses the reaction pretRNA = a 3'-half-tRNA molecule with a 5'-OH end + a 5'-half-tRNA molecule with a 2',3'-cyclic phosphate end + an intron with a 2',3'-cyclic phosphate and a 5'-hydroxyl terminus.. Functionally, endonuclease that removes tRNA introns. Cleaves pre-tRNA at the 5'- and 3'-splice sites to release the intron. The products are an intron and two tRNA half-molecules bearing 2',3' cyclic phosphate and 5'-OH termini. Recognizes a pseudosymmetric substrate in which 2 bulged loops of 3 bases are separated by a stem of 4 bp. In Picrophilus torridus (strain ATCC 700027 / DSM 9790 / JCM 10055 / NBRC 100828 / KAW 2/3), this protein is tRNA-splicing endonuclease.